A 541-amino-acid chain; its full sequence is Chaperonin GroEL 2 (541 aa).

ATP contacts are provided by residues 29 to 32, 86 to 90, glycine 413, 476 to 478, and aspartate 492; these read TLGP, DGTTT, and NAA.

The protein belongs to the chaperonin (HSP60) family. As to quaternary structure, forms a cylinder of 14 subunits composed of two heptameric rings stacked back-to-back. Interacts with the co-chaperonin GroES.

Its subcellular location is the secreted. The protein resides in the capsule. It localises to the cell surface. The protein localises to the cell wall. It carries out the reaction ATP + H2O + a folded polypeptide = ADP + phosphate + an unfolded polypeptide.. In terms of biological role, together with its co-chaperonin GroES, plays an essential role in assisting protein folding. The GroEL-GroES system forms a nano-cage that allows encapsulation of the non-native substrate proteins and provides a physical environment optimized to promote and accelerate protein folding. In Mycobacterium leprae (strain TN), this protein is Chaperonin GroEL 2.